The following is a 700-amino-acid chain: Protein claret segregational (700 aa).

Residues Ser94 and Ser96 each carry the phosphoserine modification. Residues 141–185 (APSSITATAVKRPPVTRPAPRAAGGAAAKKPAGTGAAASSGAAAA) form a disordered region. Residues 149–185 (AVKRPPVTRPAPRAAGGAAAKKPAGTGAAASSGAAAA) are compositionally biased toward low complexity. The stretch at 196–346 (KARFHDLLEK…ELHNTVMDLR (151 aa)) forms a coiled coil. A Kinesin motor domain is found at 348 to 670 (NIRVFCRIRP…LRFAASVNSC (323 aa)). 434–441 (GQTGSGKT) is a binding site for ATP. Positions 664–668 (AASVN) are required for minus-end directionality. A disordered region spans residues 681 to 700 (LNNSVANSSTQSNNSGSFDK).

This sequence belongs to the TRAFAC class myosin-kinesin ATPase superfamily. Kinesin family. NCD subfamily.

The protein resides in the cytoplasm. It is found in the cytoskeleton. It catalyses the reaction ATP + H2O = ADP + phosphate + H(+). Its function is as follows. Minus-end-directed microtubule-based motor protein. Has ATPase activity. Required for normal chromosomal segregation in meiosis in females, and in early mitotic divisions of the embryo. The polypeptide is Protein claret segregational (ncd) (Drosophila melanogaster (Fruit fly)).